The chain runs to 1682 residues: Sodium channel protein type 7 subunit alpha (1682 aa).

At 1–117 (MLASPEPKGL…RRTTIKVLVH (117 aa)) the chain is on the cytoplasmic side. Residues 100–401 (TLSPFNCIRR…ILAMAYEEEK (302 aa)) form an I repeat. The helical transmembrane segment at 118–137 (PFFQLFILISVLIDCVFMSL) threads the bilayer. The Extracellular segment spans residues 138-141 (TNLP). Residues 142-167 (KWRPVLENTLLGIYTFEILVKLFARG) form a helical membrane-spanning segment. The Cytoplasmic segment spans residues 168-178 (VWAGSFSFLGD). Residues 179–196 (PWNWLDFSVTVFEVIIRY) traverse the membrane as a helical segment. Residues 197 to 200 (SPLD) are Extracellular-facing. Residues 201 to 219 (FIPTLQTARTLRILKIIPL) form a helical membrane-spanning segment. At 220 to 237 (NQGLKSLVGVLIHCLKQL) the chain is on the cytoplasmic side. The chain crosses the membrane as a helical span at residues 238 to 259 (IGVIILTLFFLSIFSLIGMGLF). The Extracellular portion of the chain corresponds to 260-338 (MGNLKHKCFR…PDQGFTNFDS (79 aa)). The cysteines at positions 267 and 307 are disulfide-linked. Residues asparagine 276, asparagine 281, and asparagine 309 are each glycosylated (N-linked (GlcNAc...) asparagine). The pore-forming intramembrane region spans 339-366 (FGWALFALFRLMAQDYPEVLYHQILYAS). A topological domain (extracellular) is located at residue glycine 367. The chain crosses the membrane as a helical span at residues 368–407 (KVYMIFFVVVSFLFSFYMASLFLGILAMAYEEEKQRVGEI). At 408-505 (SKKIEPKFQQ…EFVHRIIMAP (98 aa)) the chain is on the cytoplasmic side. A Phosphoserine; by PKA modification is found at serine 442. Residues 487-758 (CSPCWLKLKE…QLAVARIKKG (272 aa)) form an II repeat. A helical membrane pass occupies residues 506 to 521 (FTDLFLIICIILNVCF). Over 522–530 (LTLEHYPMS) the chain is Extracellular. Residues 531 to 559 (KQTNTLLNIGNLVFIGIFTAEMIFKIIAM) traverse the membrane as a helical segment. The Cytoplasmic segment spans residues 560–568 (HPYGYFQVG). A helical transmembrane segment spans residues 569–586 (WNIFDSMIVFHGLIELCL). Topologically, residues 587-592 (ANVAGM) are extracellular. Residues 593–609 (ALLRLFRMLRIFKLGKY) traverse the membrane as a helical segment. Topologically, residues 610–626 (WPTFQILMWSLSNSWVA) are cytoplasmic. Residues 627–655 (LKDLVLLLFTFIFFSAAFGMKLFGKNYEE) form a helical membrane-spanning segment. The Extracellular segment spans residues 656 to 673 (FVCHIDKDCQLPRWHMHD). 2 cysteine pairs are disulfide-bonded: cysteine 658–cysteine 664 and cysteine 696–cysteine 705. An intramembrane region (pore-forming) is located at residues 674–700 (FFHSFLNVFRILCGEWVETLWDCMEVA). A topological domain (extracellular) is located at residue glycine 701. The helical transmembrane segment at 702 to 732 (QSWCIPFYLMVILIGNLLVLYLFLALVSSFS) threads the bilayer. Residues 733 to 934 (SCKDVTAEEN…KTCCKIVENN (202 aa)) are Cytoplasmic-facing. At threonine 777 the chain carries Phosphothreonine; by PKA. Residues 801–871 (TQDFLKDKEK…SKEKIKQSSS (71 aa)) are disordered. Basic and acidic residues predominate over residues 804–819 (FLKDKEKSSGTEKNAT). Positions 820–834 (ENESQSLIPSPSVSE) are enriched in polar residues. Position 843 is a phosphoserine (serine 843). Phosphoserine; by PKA is present on residues serine 869 and serine 905. One copy of the III repeat lies at 916 to 1224 (KGKIWQNIRK…RKQYRRLKKL (309 aa)). The chain crosses the membrane as a helical span at residues 935 to 953 (WFKCFIGLVTLLSTGTLAF). Topologically, residues 954-961 (EDIYMDQR) are extracellular. Residues 962–990 (KTIKILLEYADMIFTYIFILEMLLKWMAY) form a helical membrane-spanning segment. The Cytoplasmic portion of the chain corresponds to 991 to 998 (GFKAYFSN). The chain crosses the membrane as a helical span at residues 999–1020 (GWYRLDFVVVIVFCLSLIGKTR). A topological domain (extracellular) is located at residue glutamate 1021. Residues 1022–1040 (ELKPLISMKFLRPLRVLSQ) form a helical membrane-spanning segment. Topologically, residues 1041 to 1055 (FERMKVVVRALIKTT) are cytoplasmic. The chain crosses the membrane as a helical span at residues 1056–1080 (LPTLNVFLVCLMIWLIFSIMGVDLF). The Extracellular portion of the chain corresponds to 1081-1127 (AGRFYECIDPTSGERFPSSEVMNKSRCESLLFNESMLWENAKMNFDN). Cysteines 1087 and 1107 form a disulfide. N-linked (GlcNAc...) asparagine glycans are attached at residues asparagine 1103 and asparagine 1113. An intramembrane region (pore-forming) is located at residues 1128–1154 (VGNGFLSLLQVATFNGWITIMNSAIDS). The Extracellular portion of the chain corresponds to 1155-1167 (VAVNIQPHFEVNI). The chain crosses the membrane as a helical span at residues 1168-1202 (YMYCYFINFIIFGVFLPLSMLITVIIDNFNKHKIK). At 1203–1250 (LGGSNIFITVKQRKQYRRLKKLMYEDSQRPVPRPLNKLQGFIFDVVTS) the chain is on the cytoplasmic side. The stretch at 1233 to 1531 (VPRPLNKLQG…WKRFDPDRTQ (299 aa)) is one IV repeat. The chain crosses the membrane as a helical span at residues 1251–1272 (QAFNVIVMVLICFQAIAMMIDT). Residues 1273-1276 (DVQS) lie on the Extracellular side of the membrane. The chain crosses the membrane as a helical span at residues 1277 to 1305 (LQMSIALYWINSIFVMLYTMECILKLIAF). Over 1306–1312 (RCFYFTI) the chain is Cytoplasmic. Residues 1313 to 1338 (AWNIFDFMVVIFSITGLCLPMTVGSY) traverse the membrane as a helical segment. Residues 1339-1341 (LVP) lie on the Extracellular side of the membrane. The helical transmembrane segment at 1342-1362 (PSLVQLILLSRIIHMLRLGKG) threads the bilayer. Over 1363–1377 (PKVFHNLMLPLMLSL) the chain is Cytoplasmic. A helical transmembrane segment spans residues 1378–1402 (PALLNIILLIFLVMFIYAVFGMYNF). Residues 1403-1420 (AYVKKEAGINDVSNFETF) lie on the Extracellular side of the membrane. The pore-forming intramembrane region spans 1421–1444 (GNSMLCLFQVAIFAGWDGMLDAIF). Residues 1445 to 1468 (NSKWSDCDPDKINPGTQVRGDCGN) are Extracellular-facing. A disulfide bridge connects residues cysteine 1451 and cysteine 1466. A helical transmembrane segment spans residues 1469 to 1504 (PSVGIFYFVSYILISWLIIVNMYIVVVMEFLNIASK). The Cytoplasmic segment spans residues 1505–1682 (KKNKTLSEDD…KEKSPIQSQI (178 aa)).

The protein belongs to the sodium channel (TC 1.A.1.10) family. SCN7A subfamily. In terms of assembly, the sodium channel formed by SCN7A is probably a heterooligomeric complex consisting of the ion conducting pore forming alpha subunit SCN7A and regulatory beta subunits such as SCN3B. Interacts with ATP1A1; activates ATP1A1 and thereby indirectly signals to nearby neurons to regulate sodium homeostasis. As to expression, heart and uterus.

The protein resides in the cell membrane. The enzyme catalyses Na(+)(in) = Na(+)(out). Sodium leak channel functioning as an osmosensor regulating sodium ion levels in various tissues and organs. While most sodium channels are voltage-gated, SCN7A is not and lets sodium flow through membrane along its concentration gradient. In glial cells of the central nervous system, senses body-fluid sodium levels and controls salt intake behavior as well as voluntary water intake through activation of nearby neurons to maintain appropriate sodium levels in the body. By mediating sodium influx into keratinocytes, also plays a role in skin barrier homeostasis. The polypeptide is Sodium channel protein type 7 subunit alpha (Homo sapiens (Human)).